We begin with the raw amino-acid sequence, 595 residues long: Tripeptidyl-peptidase SED3 (595 aa).

The N-terminal stretch at methionine 1–alanine 22 is a signal peptide. A propeptide spans leucine 23–asparagine 201 (removed in mature form). N-linked (GlcNAc...) asparagine glycosylation is found at asparagine 207, asparagine 264, and asparagine 278. The Peptidase S53 domain occupies threonine 209–leucine 595. Active-site charge relay system residues include glutamate 285 and aspartate 289. Residues asparagine 298 and asparagine 365 are each glycosylated (N-linked (GlcNAc...) asparagine). The active-site Charge relay system is the serine 499. Positions 541 and 542 each coordinate Ca(2+). Residues asparagine 554, asparagine 557, and asparagine 569 are each glycosylated (N-linked (GlcNAc...) asparagine). Positions 573 and 575 each coordinate Ca(2+).

It depends on Ca(2+) as a cofactor.

The protein resides in the secreted. Its subcellular location is the extracellular space. It carries out the reaction Release of an N-terminal tripeptide from a polypeptide.. Its function is as follows. Secreted tripeptidyl-peptidase which degrades proteins at acidic pHs and is involved in virulence. In Arthroderma otae (strain ATCC MYA-4605 / CBS 113480) (Microsporum canis), this protein is Tripeptidyl-peptidase SED3 (SED3).